The chain runs to 427 residues: Adenylosuccinate synthetase (427 aa).

GTP-binding positions include 12–18 (GDEGKGK) and 40–42 (GHT). The Proton acceptor role is filled by D13. Positions 13 and 40 each coordinate Mg(2+). IMP is bound by residues 13 to 16 (DEGK), 38 to 41 (NAGH), T126, R140, Q221, T236, and R299. The active-site Proton donor is the H41. Substrate is bound at residue 295 to 301 (STTKRPR). Residues R301, 327 to 329 (KLD), and 409 to 411 (SVG) each bind GTP.

It belongs to the adenylosuccinate synthetase family. As to quaternary structure, homodimer. Mg(2+) is required as a cofactor.

It is found in the cytoplasm. It catalyses the reaction IMP + L-aspartate + GTP = N(6)-(1,2-dicarboxyethyl)-AMP + GDP + phosphate + 2 H(+). It functions in the pathway purine metabolism; AMP biosynthesis via de novo pathway; AMP from IMP: step 1/2. Its function is as follows. Plays an important role in the de novo pathway of purine nucleotide biosynthesis. Catalyzes the first committed step in the biosynthesis of AMP from IMP. The chain is Adenylosuccinate synthetase from Borrelia recurrentis (strain A1).